A 527-amino-acid polypeptide reads, in one-letter code: ATP synthase subunit alpha (527 aa).

Residue 172 to 179 (GDRQTGKT) coordinates ATP.

This sequence belongs to the ATPase alpha/beta chains family. As to quaternary structure, F-type ATPases have 2 components, CF(1) - the catalytic core - and CF(0) - the membrane proton channel. CF(1) has five subunits: alpha(3), beta(3), gamma(1), delta(1), epsilon(1). CF(0) has three main subunits: a(1), b(2) and c(9-12). The alpha and beta chains form an alternating ring which encloses part of the gamma chain. CF(1) is attached to CF(0) by a central stalk formed by the gamma and epsilon chains, while a peripheral stalk is formed by the delta and b chains.

The protein resides in the cell inner membrane. It catalyses the reaction ATP + H2O + 4 H(+)(in) = ADP + phosphate + 5 H(+)(out). In terms of biological role, produces ATP from ADP in the presence of a proton gradient across the membrane. The alpha chain is a regulatory subunit. This chain is ATP synthase subunit alpha, found in Bacteroides fragilis (strain ATCC 25285 / DSM 2151 / CCUG 4856 / JCM 11019 / LMG 10263 / NCTC 9343 / Onslow / VPI 2553 / EN-2).